A 291-amino-acid chain; its full sequence is Nucleotide-binding protein Lm4b_02443 (291 aa).

13–20 (GMSGAGKT) lines the ATP pocket. A GTP-binding site is contributed by 63-66 (DLRG).

Belongs to the RapZ-like family.

Displays ATPase and GTPase activities. In Listeria monocytogenes serotype 4b (strain CLIP80459), this protein is Nucleotide-binding protein Lm4b_02443.